Here is a 571-residue protein sequence, read N- to C-terminus: Hemagglutinin-neuraminidase (571 aa).

Over 1-26 (MDRAVSRVALENEEREAKNTWRFVFR) the chain is Intravirion. The chain crosses the membrane as a helical span at residues 27–47 (IAILLLIVITLAISAAALVYS). Residues 48–571 (MEASTPGDLV…LVEILKNDGV (524 aa)) are Virion surface-facing. An N-linked (GlcNAc...) asparagine; by host glycan is attached at Asn119. The tract at residues 124 to 152 (GAPVHDPDYIGGIGKELIVDDASDVTSFY) is important for interaction with fusion/F protein. 3 cysteine pairs are disulfide-bonded: Cys172-Cys196, Cys186-Cys247, and Cys238-Cys251. The involved in neuraminidase activity stretch occupies residues 234–239 (NRKSCS). Residues Asn341 and Asn433 are each glycosylated (N-linked (GlcNAc...) asparagine; by host). Disulfide bonds link Cys344-Cys461 and Cys455-Cys465. Asn481, Asn508, and Asn538 each carry an N-linked (GlcNAc...) asparagine; by host glycan.

This sequence belongs to the paramyxoviruses hemagglutinin-neuraminidase family. As to quaternary structure, homotetramer; composed of disulfide-linked homodimers. Interacts with F protein trimer. Interacts with host CG-1B; this interaction inhibits viral adsorption and replication rather than internalization.

It is found in the virion membrane. Its subcellular location is the host cell membrane. The enzyme catalyses Hydrolysis of alpha-(2-&gt;3)-, alpha-(2-&gt;6)-, alpha-(2-&gt;8)- glycosidic linkages of terminal sialic acid residues in oligosaccharides, glycoproteins, glycolipids, colominic acid and synthetic substrates.. Its function is as follows. Mediates the viral entry into the host cell together with fusion/F protein. Attaches the virus to sialic acid-containing cell receptors and thereby initiates infection. Binding of HN protein to the receptor induces a conformational change that allows the F protein to trigger virion/cell membranes fusion. Functionally, neuraminidase activity ensures the efficient spread of the virus by dissociating the mature virions from the neuraminic acid containing glycoproteins. This is Hemagglutinin-neuraminidase (HN) from Gallus gallus (Chicken).